A 238-amino-acid chain; its full sequence is Type III secretion protein hrcQa (238 aa).

A hrcQa-C region spans residues 66-238; the sequence is DAEALLSLLG…SHEEHRHHEY (173 aa).

Interacts with hrcQb.

Its subcellular location is the cell inner membrane. Its function is as follows. Component of the type III secretion system, which is required for effector protein delivery, parasitism, and pathogenicity. Probably participates in the formation of a C-ring-like assembly along with hrcQb. This is Type III secretion protein hrcQa (hrcQa) from Pseudomonas savastanoi pv. phaseolicola (Pseudomonas syringae pv. phaseolicola).